The primary structure comprises 321 residues: MSKPIQMEKGVKYRDADKMALIPVKNMPAEQKEVLRKPAWMKIKLPSDSHRIQEIKSAMRKNNLHSVCEEASCPNLAECFNHGTATFMILGAICTRRCPFCDVAHGRPNAPEAEEPKKLAKTIKDMKLKYVVITSVDRDDLRDGGAQHFADCNREIREQNPNIRIETLVPDFRGRMDVALELMKDNPPDVFNHNLETAPRLYRKARPGANYKWSLDLLRKFKEQHPNIPTKSGVMMGLGETKEEIVQVLKDLREHGVTMLTLGQYLAPSRHHLPVERYVPPSEFDELKEIALELGFTHAACGPFVRSSYHADLQAQGMEIK.

7 residues coordinate [4Fe-4S] cluster: Cys68, Cys73, Cys79, Cys94, Cys98, Cys101, and Ser308. The region spanning Phe80–Thr297 is the Radical SAM core domain.

It belongs to the radical SAM superfamily. Lipoyl synthase family. [4Fe-4S] cluster serves as cofactor.

It is found in the cytoplasm. The enzyme catalyses [[Fe-S] cluster scaffold protein carrying a second [4Fe-4S](2+) cluster] + N(6)-octanoyl-L-lysyl-[protein] + 2 oxidized [2Fe-2S]-[ferredoxin] + 2 S-adenosyl-L-methionine + 4 H(+) = [[Fe-S] cluster scaffold protein] + N(6)-[(R)-dihydrolipoyl]-L-lysyl-[protein] + 4 Fe(3+) + 2 hydrogen sulfide + 2 5'-deoxyadenosine + 2 L-methionine + 2 reduced [2Fe-2S]-[ferredoxin]. It functions in the pathway protein modification; protein lipoylation via endogenous pathway; protein N(6)-(lipoyl)lysine from octanoyl-[acyl-carrier-protein]: step 2/2. Functionally, catalyzes the radical-mediated insertion of two sulfur atoms into the C-6 and C-8 positions of the octanoyl moiety bound to the lipoyl domains of lipoate-dependent enzymes, thereby converting the octanoylated domains into lipoylated derivatives. In Vibrio atlanticus (strain LGP32) (Vibrio splendidus (strain Mel32)), this protein is Lipoyl synthase.